A 257-amino-acid chain; its full sequence is S-methyl-5'-thioadenosine phosphorylase (257 aa).

Residues Ser-10 and 50 to 51 (RH) each bind phosphate. A substrate-binding site is contributed by Met-180. Position 181 (Thr-181) interacts with phosphate. 204–206 (DYD) lines the substrate pocket.

This sequence belongs to the PNP/MTAP phosphorylase family. MTAP subfamily. As to quaternary structure, homohexamer. Dimer of a homotrimer.

The enzyme catalyses S-methyl-5'-thioadenosine + phosphate = 5-(methylsulfanyl)-alpha-D-ribose 1-phosphate + adenine. The protein operates within amino-acid biosynthesis; L-methionine biosynthesis via salvage pathway; S-methyl-5-thio-alpha-D-ribose 1-phosphate from S-methyl-5'-thioadenosine (phosphorylase route): step 1/1. Catalyzes the reversible phosphorylation of S-methyl-5'-thioadenosine (MTA) to adenine and 5-methylthioribose-1-phosphate. Involved in the breakdown of MTA, a major by-product of polyamine biosynthesis. Responsible for the first step in the methionine salvage pathway after MTA has been generated from S-adenosylmethionine. Has broad substrate specificity with 6-aminopurine nucleosides as preferred substrates. This Pyrococcus abyssi (strain GE5 / Orsay) protein is S-methyl-5'-thioadenosine phosphorylase (mntP).